Consider the following 398-residue polypeptide: tRNA pseudouridine synthase D (398 aa).

The active-site Nucleophile is the Asp76. Residues 151-360 enclose the TRUD domain; it reads GVPNFFGEQR…MPGERRPLRI (210 aa).

This sequence belongs to the pseudouridine synthase TruD family.

The enzyme catalyses uridine(13) in tRNA = pseudouridine(13) in tRNA. Responsible for synthesis of pseudouridine from uracil-13 in transfer RNAs. This is tRNA pseudouridine synthase D from Syntrophotalea carbinolica (strain DSM 2380 / NBRC 103641 / GraBd1) (Pelobacter carbinolicus).